Here is a 407-residue protein sequence, read N- to C-terminus: MLEIILGVFFFTAIVVALVFVILGAKSKLVAEGNVEVLINGERTIHVPIGSKLLTALADNNLFVSSACGGGGTCAQCRVQVLEGGGEILPTELSHITKREAAQGDRLSCQVTVKQNMKIHVHEEVFGVKKWECTVRSNRNVATFIKELVLELPAGENVDFRAGGYIQIECPPYDCKFSDFAIEPEYREDWDKYDLWKIESHVKAPAIRAYSMANYPEEKGIIMLNVRIATPPWGKEGTVPPGVMSSYIFNLKPGDKVTISGPFGEFFARDTDKEMVFIGGGAGMAPMRSHIFDQLLRLKSKRKMTFWYGARSLREAFYVEEFDRLQAENPNFKWFLGLSDPKPEDGWTGYTGFIHNILYEQYLKNHPAPEDCEYYMCGPPMMNSAVIQMLLDIGVDRENIMLDDFGG.

A helical membrane pass occupies residues 4 to 24; the sequence is IILGVFFFTAIVVALVFVILG. A 2Fe-2S ferredoxin-type domain is found at 33–125; the sequence is GNVEVLINGE…NMKIHVHEEV (93 aa). Positions 68, 74, 77, and 109 each coordinate [2Fe-2S] cluster. The region spanning 128–269 is the FAD-binding FR-type domain; the sequence is VKKWECTVRS…SGPFGEFFAR (142 aa).

Belongs to the NqrF family. As to quaternary structure, composed of six subunits; NqrA, NqrB, NqrC, NqrD, NqrE and NqrF. [2Fe-2S] cluster serves as cofactor. It depends on FAD as a cofactor.

The protein resides in the cell inner membrane. It catalyses the reaction a ubiquinone + n Na(+)(in) + NADH + H(+) = a ubiquinol + n Na(+)(out) + NAD(+). Its function is as follows. NQR complex catalyzes the reduction of ubiquinone-1 to ubiquinol by two successive reactions, coupled with the transport of Na(+) ions from the cytoplasm to the periplasm. The first step is catalyzed by NqrF, which accepts electrons from NADH and reduces ubiquinone-1 to ubisemiquinone by a one-electron transfer pathway. The chain is Na(+)-translocating NADH-quinone reductase subunit F from Methylococcus capsulatus (strain ATCC 33009 / NCIMB 11132 / Bath).